Consider the following 239-residue polypeptide: 1-(5-phosphoribosyl)-5-[(5-phosphoribosylamino)methylideneamino] imidazole-4-carboxamide isomerase (239 aa).

Aspartate 9 serves as the catalytic Proton acceptor. Aspartate 131 serves as the catalytic Proton donor.

It belongs to the HisA/HisF family.

It localises to the cytoplasm. It carries out the reaction 1-(5-phospho-beta-D-ribosyl)-5-[(5-phospho-beta-D-ribosylamino)methylideneamino]imidazole-4-carboxamide = 5-[(5-phospho-1-deoxy-D-ribulos-1-ylimino)methylamino]-1-(5-phospho-beta-D-ribosyl)imidazole-4-carboxamide. It functions in the pathway amino-acid biosynthesis; L-histidine biosynthesis; L-histidine from 5-phospho-alpha-D-ribose 1-diphosphate: step 4/9. In Bacteroides fragilis (strain YCH46), this protein is 1-(5-phosphoribosyl)-5-[(5-phosphoribosylamino)methylideneamino] imidazole-4-carboxamide isomerase.